The following is a 406-amino-acid chain: Tryptophan synthase beta chain (406 aa).

Position 99 is an N6-(pyridoxal phosphate)lysine (Lys99).

This sequence belongs to the TrpB family. In terms of assembly, tetramer of two alpha and two beta chains. It depends on pyridoxal 5'-phosphate as a cofactor.

It carries out the reaction (1S,2R)-1-C-(indol-3-yl)glycerol 3-phosphate + L-serine = D-glyceraldehyde 3-phosphate + L-tryptophan + H2O. The protein operates within amino-acid biosynthesis; L-tryptophan biosynthesis; L-tryptophan from chorismate: step 5/5. Its function is as follows. The beta subunit is responsible for the synthesis of L-tryptophan from indole and L-serine. This chain is Tryptophan synthase beta chain, found in Chelativorans sp. (strain BNC1).